Here is a 264-residue protein sequence, read N- to C-terminus: Small ribosomal subunit protein eS1A (264 aa).

A disordered region spans residues 233–264; sequence GEGGGTGKPAGDETGAKVERADGYEPPVQESV. Residues 242-255 are compositionally biased toward basic and acidic residues; sequence AGDETGAKVERADG.

The protein belongs to the eukaryotic ribosomal protein eS1 family. Component of the small ribosomal subunit. Mature ribosomes consist of a small (40S) and a large (60S) subunit. The 40S subunit contains about 33 different proteins and 1 molecule of RNA (18S). The 60S subunit contains about 49 different proteins and 3 molecules of RNA (28S, 5.8S and 5S). Part of the small subunit (SSU) processome, composed of more than 70 proteins and the RNA chaperone small nucleolar RNA (snoRNA) U3.

It localises to the cytoplasm. The protein localises to the nucleus. It is found in the nucleolus. Its function is as follows. Component of the small ribosomal subunit. The ribosome is a large ribonucleoprotein complex responsible for the synthesis of proteins in the cell. Part of the small subunit (SSU) processome, first precursor of the small eukaryotic ribosomal subunit. During the assembly of the SSU processome in the nucleolus, many ribosome biogenesis factors, an RNA chaperone and ribosomal proteins associate with the nascent pre-rRNA and work in concert to generate RNA folding, modifications, rearrangements and cleavage as well as targeted degradation of pre-ribosomal RNA by the RNA exosome. May play a role during erythropoiesis. This chain is Small ribosomal subunit protein eS1A (rps3a-a), found in Xenopus laevis (African clawed frog).